The primary structure comprises 552 residues: 4-coumarate--CoA ligase-like 4 (552 aa).

The disordered stretch occupies residues 182–205 (ISATTPDPARRKDRVTQDDPATLL). Residues 189–198 (PARRKDRVTQ) show a composition bias toward basic and acidic residues. 6 residues coordinate ATP: Ser-207, Ser-208, Gly-209, Thr-210, Thr-211, and Lys-215. Position 256 (Tyr-256) interacts with (E)-4-coumaroyl-AMP. Lys-277 is a binding site for CoA. An SBD1 region spans residues 279-346 (ELPEMLRSIN…EKYPQVEILQ (68 aa)). The (E)-4-coumaroyl-AMP site is built by Gly-324, Gln-346, Gly-347, and Thr-351. Residues Gln-346, Gly-347, Thr-351, Asp-432, and Arg-447 each coordinate ATP. An SBD2 region spans residues 347-411 (GYGLTESTAI…IRGPYVMKGY (65 aa)). Positions 449 and 453 each coordinate (E)-4-coumaroyl-AMP. Lys-455 and Gly-456 together coordinate CoA. Lys-538 is an ATP binding site.

It belongs to the ATP-dependent AMP-binding enzyme family. The cofactor is Mg(2+).

It carries out the reaction (E)-4-coumarate + ATP + CoA = (E)-4-coumaroyl-CoA + AMP + diphosphate. The enzyme catalyses (E)-4-coumarate + ATP + H(+) = (E)-4-coumaroyl-AMP + diphosphate. It catalyses the reaction (E)-4-coumaroyl-AMP + CoA = (E)-4-coumaroyl-CoA + AMP + H(+). In terms of biological role, carboxylate--CoA ligase that may use 4-coumarate as substrate. Follows a two-step reaction mechanism, wherein the carboxylate substrate first undergoes adenylation by ATP, followed by a thioesterification in the presence of CoA to yield the final CoA thioester. In Oryza sativa subsp. japonica (Rice), this protein is 4-coumarate--CoA ligase-like 4 (4CLL4).